Consider the following 359-residue polypeptide: 1-deoxy-D-xylulose 5-phosphate reductoisomerase (359 aa).

Residues Thr-7, Gly-8, Ser-9, Ile-10, Gly-31, Lys-32, Asn-33, and Asn-111 each contribute to the NADPH site. Lys-112 serves as a coordination point for 1-deoxy-D-xylulose 5-phosphate. Glu-113 is a binding site for NADPH. Asp-131 provides a ligand contact to Mn(2+). Positions 132, 133, 155, and 178 each coordinate 1-deoxy-D-xylulose 5-phosphate. Glu-133 is a binding site for Mn(2+). NADPH is bound at residue Gly-184. Residues Ser-191, Asn-196, Lys-197, and Glu-200 each contribute to the 1-deoxy-D-xylulose 5-phosphate site. Glu-200 is a Mn(2+) binding site.

It belongs to the DXR family. It depends on Mg(2+) as a cofactor. Mn(2+) serves as cofactor.

The enzyme catalyses 2-C-methyl-D-erythritol 4-phosphate + NADP(+) = 1-deoxy-D-xylulose 5-phosphate + NADPH + H(+). The protein operates within isoprenoid biosynthesis; isopentenyl diphosphate biosynthesis via DXP pathway; isopentenyl diphosphate from 1-deoxy-D-xylulose 5-phosphate: step 1/6. Its function is as follows. Catalyzes the NADPH-dependent rearrangement and reduction of 1-deoxy-D-xylulose-5-phosphate (DXP) to 2-C-methyl-D-erythritol 4-phosphate (MEP). The polypeptide is 1-deoxy-D-xylulose 5-phosphate reductoisomerase (Campylobacter lari (strain RM2100 / D67 / ATCC BAA-1060)).